The sequence spans 523 residues: Sensory neuron membrane protein 1 (523 aa).

Over 1–11 (MQLPKELKYAA) the chain is Cytoplasmic. Residues 12-32 (IAGGVALFGLIFGWVLFPTIL) traverse the membrane as a helical segment. The Extracellular segment spans residues 33–458 (KSQLKKEMAL…HQLFIPKRVV (426 aa)). 2 N-linked (GlcNAc...) asparagine glycosylation sites follow: Asn67 and Asn229. 3 cysteine pairs are disulfide-bonded: Cys268–Cys333, Cys297–Cys352, and Cys335–Cys341. Residue Asn440 is glycosylated (N-linked (GlcNAc...) asparagine). A helical transmembrane segment spans residues 459-479 (GVLRWWVVSFGSLGAVIGIVF). At 480 to 523 (HFRDHIMRLAVSGDTKVSKVTPEEPEQKDISVIGQAQEPAKVNI) the chain is on the cytoplasmic side.

Belongs to the CD36 family. In terms of tissue distribution, detected in sensory neurons in the antenna.

The protein resides in the cell membrane. In terms of biological role, plays an olfactory role that is not restricted to pheromone sensitivity. This Heliothis virescens (Tobacco budworm moth) protein is Sensory neuron membrane protein 1.